The primary structure comprises 424 residues: Protein arginine N-methyltransferase 2 (424 aa).

2 disordered regions span residues 67-89 (DEAQTETNGVNGETSSASTEQKS) and 151-212 (YEPL…SSRY). The span at 71 to 89 (TETNGVNGETSSASTEQKS) shows a compositional bias: polar residues. Low complexity-rich tracts occupy residues 163-173 (TGQGEDAANEP) and 187-201 (ETTAADASAAEASTE). One can recognise an RMT2 domain in the interval 205–424 (PDVTSSRYLD…YRLPLCKFMD (220 aa)). Residues tyrosine 212, methionine 241, 261-266 (HGMGIV), 282-284 (EAH), 309-310 (WQ), and aspartate 329 contribute to the S-adenosyl-L-methionine site.

It belongs to the class I-like SAM-binding methyltransferase superfamily. RMT2 methyltransferase family. Monomer.

The protein resides in the cytoplasm. The protein localises to the nucleus. Functionally, S-adenosyl-L-methionine-dependent protein-arginine N-methyltransferase that methylates the delta-nitrogen atom of arginine residues to form N5-methylarginine (type IV) in target proteins. Monomethylates ribosomal protein L12. The protein is Protein arginine N-methyltransferase 2 of Aspergillus fumigatus (strain ATCC MYA-4609 / CBS 101355 / FGSC A1100 / Af293) (Neosartorya fumigata).